Reading from the N-terminus, the 430-residue chain is ATP-dependent RNA helicase RhlB (430 aa).

The Q motif signature appears at 9 to 37; it reads QKFSDFALHPQVIEALETKGFHNCTPIQA. A Helicase ATP-binding domain is found at 40-219; the sequence is LPFTLSGRDV…FENMNNAEYV (180 aa). Residue 53-60 coordinates ATP; the sequence is AQTGTGKT. Positions 165–168 match the DEAD box motif; it reads DEAD. One can recognise a Helicase C-terminal domain in the interval 245–390; sequence RLLQTLIEEE…VSRYNSDALM (146 aa). The disordered stretch occupies residues 388 to 430; it reads ALMTDLPPPKRLTRNRSGNGPRRGGNNNRRSSASRSPNRKRSG. Low complexity predominate over residues 402–423; it reads NRSGNGPRRGGNNNRRSSASRS.

It belongs to the DEAD box helicase family. RhlB subfamily. In terms of assembly, component of the RNA degradosome, which is a multiprotein complex involved in RNA processing and mRNA degradation.

The protein resides in the cytoplasm. It carries out the reaction ATP + H2O = ADP + phosphate + H(+). DEAD-box RNA helicase involved in RNA degradation. Has RNA-dependent ATPase activity and unwinds double-stranded RNA. The sequence is that of ATP-dependent RNA helicase RhlB from Erwinia tasmaniensis (strain DSM 17950 / CFBP 7177 / CIP 109463 / NCPPB 4357 / Et1/99).